The sequence spans 78 residues: MGLSFQHILILLVVVLLLFGRNKISDLMGDFAKGIKAFKKGMSDDEVETAKSDSIKTIDNTGKPTNVQANPQRQDSTV.

A helical transmembrane segment spans residues 4 to 21 (SFQHILILLVVVLLLFGR). The tract at residues 49–78 (TAKSDSIKTIDNTGKPTNVQANPQRQDSTV) is disordered. Residues 57–78 (TIDNTGKPTNVQANPQRQDSTV) show a composition bias toward polar residues.

This sequence belongs to the TatA/E family. As to quaternary structure, the Tat system comprises two distinct complexes: a TatABC complex, containing multiple copies of TatA, TatB and TatC subunits, and a separate TatA complex, containing only TatA subunits. Substrates initially bind to the TatABC complex, which probably triggers association of the separate TatA complex to form the active translocon.

It is found in the cell inner membrane. Part of the twin-arginine translocation (Tat) system that transports large folded proteins containing a characteristic twin-arginine motif in their signal peptide across membranes. TatA could form the protein-conducting channel of the Tat system. This is Sec-independent protein translocase protein TatA from Afipia carboxidovorans (strain ATCC 49405 / DSM 1227 / KCTC 32145 / OM5) (Oligotropha carboxidovorans).